A 286-amino-acid polypeptide reads, in one-letter code: uncharacterized protein (286 aa).

4 disordered regions span residues 1–38 (MSQKKKASLSKIHTGMNSSSKQVLSSTSSANEKTEDDV), 108–146 (HTGELSNNGAERGKIRGSTRATRKGSVNKSKSGRTRRHK), 196–227 (RTQKSSSEEGEGEFSGRGDPAPLEVGDSKTRL), and 241–286 (DVDD…PRSS). Over residues 18–29 (SSSKQVLSSTSS) the composition is skewed to low complexity. A compositionally biased stretch (basic and acidic residues) spans 243 to 268 (DDQKKDGSGEEKKEKKSAEKEKKISH). A compositionally biased stretch (polar residues) spans 269–278 (ENVQSLSPSS).

This is an uncharacterized protein from Caenorhabditis elegans.